A 364-amino-acid polypeptide reads, in one-letter code: Aminomethyltransferase (364 aa).

It belongs to the GcvT family. In terms of assembly, the glycine cleavage system is composed of four proteins: P, T, L and H.

It catalyses the reaction N(6)-[(R)-S(8)-aminomethyldihydrolipoyl]-L-lysyl-[protein] + (6S)-5,6,7,8-tetrahydrofolate = N(6)-[(R)-dihydrolipoyl]-L-lysyl-[protein] + (6R)-5,10-methylene-5,6,7,8-tetrahydrofolate + NH4(+). Functionally, the glycine cleavage system catalyzes the degradation of glycine. The sequence is that of Aminomethyltransferase from Klebsiella pneumoniae subsp. pneumoniae (strain ATCC 700721 / MGH 78578).